The primary structure comprises 188 residues: NADH-quinone oxidoreductase subunit I 2 (188 aa).

4Fe-4S ferredoxin-type domains lie at 56–88 (HFLK…VVPY) and 98–127 (AKFE…LGQQ). [4Fe-4S] cluster-binding residues include C68, C71, C74, C78, C107, C110, C113, and C117.

The protein belongs to the complex I 23 kDa subunit family. As to quaternary structure, NDH-1 is composed of 14 different subunits. Subunits NuoA, H, J, K, L, M, N constitute the membrane sector of the complex. [4Fe-4S] cluster serves as cofactor.

The protein resides in the cell inner membrane. It catalyses the reaction a quinone + NADH + 5 H(+)(in) = a quinol + NAD(+) + 4 H(+)(out). Its function is as follows. NDH-1 shuttles electrons from NADH, via FMN and iron-sulfur (Fe-S) centers, to quinones in the respiratory chain. The immediate electron acceptor for the enzyme in this species is believed to be ubiquinone. Couples the redox reaction to proton translocation (for every two electrons transferred, four hydrogen ions are translocated across the cytoplasmic membrane), and thus conserves the redox energy in a proton gradient. This chain is NADH-quinone oxidoreductase subunit I 2, found in Rhizobium meliloti (strain 1021) (Ensifer meliloti).